Reading from the N-terminus, the 392-residue chain is N-acetylneuraminate epimerase (392 aa).

The first 35 residues, methionine 1–alanine 35, serve as a signal peptide directing secretion. Kelch repeat units follow at residues histidine 56–serine 100, lysine 102–asparagine 155, threonine 157–asparagine 192, alanine 193–lysine 238, leucine 241–alanine 290, glutamine 312–aspartate 361, and valine 363–glutamate 392. Glutamate 247 serves as the catalytic Proton acceptor.

This sequence belongs to the NanM family. As to quaternary structure, homodimer.

The protein localises to the periplasm. The enzyme catalyses N-acetyl-alpha-neuraminate = N-acetyl-beta-neuraminate. Its function is as follows. Converts alpha-N-acetylneuranimic acid (Neu5Ac) to the beta-anomer, accelerating the equilibrium between the alpha- and beta-anomers. Probably facilitates sialidase-negative bacteria to compete successfully for limited amounts of extracellular Neu5Ac, which is likely taken up in the beta-anomer. In addition, the rapid removal of sialic acid from solution might be advantageous to the bacterium to damp down host responses. This chain is N-acetylneuraminate epimerase, found in Yersinia enterocolitica serotype O:8 / biotype 1B (strain NCTC 13174 / 8081).